Reading from the N-terminus, the 74-residue chain is WAP four-disulfide core domain protein 18 (74 aa).

The first 24 residues, 1–24, serve as a signal peptide directing secretion; it reads MKTATVFVLVALIFMTMTTAWALS. Residues 26-73 enclose the WAP domain; sequence PKEKPGACPKPPPRSFGTCDERCTGDGSCSGNMKCCSNGCGHACKPPV.

The protein localises to the secreted. Its function is as follows. Could have proteinase inhibiting capacity. This Bos taurus (Bovine) protein is WAP four-disulfide core domain protein 18 (WFDC18).